A 90-amino-acid chain; its full sequence is Probable Fe(2+)-trafficking protein (90 aa).

This sequence belongs to the Fe(2+)-trafficking protein family.

Functionally, could be a mediator in iron transactions between iron acquisition and iron-requiring processes, such as synthesis and/or repair of Fe-S clusters in biosynthetic enzymes. This is Probable Fe(2+)-trafficking protein from Paraburkholderia xenovorans (strain LB400).